The sequence spans 170 residues: Translocator protein 2 (170 aa).

5 helical membrane passes run 3-23, 45-65, 78-98, 104-124, and 130-150; these read LQGA…WLFT, VLLL…YLVW, LPLG…VLFF, GLAL…ALIW, and LAAL…ALTY.

It belongs to the TspO/BZRP family. In terms of assembly, homotetramer. May also form homodimer. In terms of tissue distribution, expressed in erythrocytes (at protein level).

It localises to the endoplasmic reticulum membrane. It is found in the cell membrane. Its function is as follows. Cholesterol-binding protein involved in the redistribution of cholesterol from lipid droplets to the endoplasmic reticulum. Required to meet cholesterol demands during erythropoietic differentiation. May play a role in transport processes at the plasma membrane of erythrocytes, including regulating VDAC-mediated ATP export, and import of the heme precursors protoporphyrin IX and 5-aminolevulinic acid. The sequence is that of Translocator protein 2 (TSPO2) from Homo sapiens (Human).